The chain runs to 88 residues: Large ribosomal subunit protein bL27 (88 aa).

Residues 1 to 25 (MAHKKAGGSSRNGRDSPGQRRGIKR) form a disordered region.

Belongs to the bacterial ribosomal protein bL27 family.

In Lawsonia intracellularis, this protein is Large ribosomal subunit protein bL27 (rpmA).